The sequence spans 367 residues: 3-dehydroquinate synthase (367 aa).

NAD(+)-binding positions include 69–74 (DGESHK), 103–107 (GVIGD), 127–128 (TT), K140, K149, and 167–170 (TLAT). The Zn(2+) site is built by E182, H245, and H262.

It belongs to the sugar phosphate cyclases superfamily. Dehydroquinate synthase family. Co(2+) serves as cofactor. It depends on Zn(2+) as a cofactor. NAD(+) is required as a cofactor.

It localises to the cytoplasm. The enzyme catalyses 7-phospho-2-dehydro-3-deoxy-D-arabino-heptonate = 3-dehydroquinate + phosphate. Its pathway is metabolic intermediate biosynthesis; chorismate biosynthesis; chorismate from D-erythrose 4-phosphate and phosphoenolpyruvate: step 2/7. Its function is as follows. Catalyzes the conversion of 3-deoxy-D-arabino-heptulosonate 7-phosphate (DAHP) to dehydroquinate (DHQ). This chain is 3-dehydroquinate synthase, found in Stutzerimonas stutzeri (strain A1501) (Pseudomonas stutzeri).